The sequence spans 552 residues: Glutathione reductase, chloroplastic/mitochondrial (552 aa).

A chloroplast and mitochondrion-targeting transit peptide spans 1-60 (MNQAMATPLSLSCCSPTLTRSTLFFTKTFPFSRSFSTPLPLSTKTLISLSPPHRTFAVRA). 6 residues coordinate FAD: Ser-83, Gly-84, Glu-103, Thr-120, Cys-121, and Lys-129. Ser-83 contacts glutathione. An intrachain disulfide couples Cys-121 to Cys-126. Tyr-178 serves as a coordination point for glutathione. Residue Gly-194 participates in FAD binding. NADP(+)-binding residues include Gly-254, Ile-257, Glu-260, Arg-277, Arg-283, and Gly-341. The FAD site is built by Asp-382 and Thr-390. NADP(+) is bound at residue Ala-420. His-515 lines the FAD pocket. His-515 serves as the catalytic Proton acceptor. Residues 527-552 (TPTRKVRKNQASQGKSDSKAKAVAGS) are disordered.

The protein belongs to the class-I pyridine nucleotide-disulfide oxidoreductase family. In terms of assembly, homodimer. It depends on FAD as a cofactor.

The protein localises to the plastid. It is found in the chloroplast. Its subcellular location is the mitochondrion. The catalysed reaction is 2 glutathione + NADP(+) = glutathione disulfide + NADPH + H(+). Functionally, catalyzes the reduction of glutathione disulfide (GSSG) to reduced glutathione (GSH). Maintains high levels of GSH in the chloroplast. This Pisum sativum (Garden pea) protein is Glutathione reductase, chloroplastic/mitochondrial (GR).